A 335-amino-acid chain; its full sequence is Lipoyl synthase (335 aa).

[4Fe-4S] cluster is bound by residues Cys55, Cys60, Cys66, Cys81, Cys85, Cys88, and Ser292. The region spanning 67–281 is the Radical SAM core domain; sequence WEDREATFLI…SKAAEEIGFL (215 aa).

The protein belongs to the radical SAM superfamily. Lipoyl synthase family. [4Fe-4S] cluster serves as cofactor.

The protein localises to the cytoplasm. It carries out the reaction [[Fe-S] cluster scaffold protein carrying a second [4Fe-4S](2+) cluster] + N(6)-octanoyl-L-lysyl-[protein] + 2 oxidized [2Fe-2S]-[ferredoxin] + 2 S-adenosyl-L-methionine + 4 H(+) = [[Fe-S] cluster scaffold protein] + N(6)-[(R)-dihydrolipoyl]-L-lysyl-[protein] + 4 Fe(3+) + 2 hydrogen sulfide + 2 5'-deoxyadenosine + 2 L-methionine + 2 reduced [2Fe-2S]-[ferredoxin]. Its pathway is protein modification; protein lipoylation via endogenous pathway; protein N(6)-(lipoyl)lysine from octanoyl-[acyl-carrier-protein]: step 2/2. In terms of biological role, catalyzes the radical-mediated insertion of two sulfur atoms into the C-6 and C-8 positions of the octanoyl moiety bound to the lipoyl domains of lipoate-dependent enzymes, thereby converting the octanoylated domains into lipoylated derivatives. This Kocuria rhizophila (strain ATCC 9341 / DSM 348 / NBRC 103217 / DC2201) protein is Lipoyl synthase.